Here is a 1046-residue protein sequence, read N- to C-terminus: Arrestin-related trafficking adapter 3 (1046 aa).

Residues tyrosine 115–phenylalanine 141 are disordered. The span at alanine 128–asparagine 140 shows a compositional bias: low complexity. Phosphoserine occurs at positions 155 and 162. 2 stretches are compositionally biased toward low complexity: residues serine 168–glycine 179 and arginine 198–arginine 210. Residues serine 168–asparagine 230 are disordered. Phosphoserine occurs at positions 213 and 586. The segment covering threonine 605 to asparagine 614 has biased composition (polar residues). 2 disordered regions span residues threonine 605–serine 627 and proline 651–serine 820. Low complexity predominate over residues phenylalanine 669–serine 694. A compositionally biased stretch (basic and acidic residues) spans lysine 734 to aspartate 785. Residues leucine 802–serine 811 show a composition bias toward low complexity. Serine 826 and serine 838 each carry phosphoserine. A disordered region spans residues asparagine 868–arginine 889. Positions histidine 877–arginine 889 are enriched in polar residues. Serine 900 bears the Phosphoserine mark. Positions glutamine 986–phenylalanine 1017 are disordered. Residues aspartate 996 to serine 1008 show a composition bias toward polar residues. Residues serine 1022 and serine 1023 each carry the phosphoserine modification.

The protein belongs to the ALY1 family. As to quaternary structure, interacts with PCL6, PCL7 and RSP5. Post-translationally, ubiquitinated by RSP5. In terms of processing, phosphorylated by the cyclin-CDKs PCL6-PHO85 and PCL7-PHO85.

The protein resides in the cytoplasm. In terms of biological role, may regulate endocytosis by recruiting RSP5 ubiquitin ligase activity to specific plasma membrane proteins in response to extracellular stimuli. The polypeptide is Arrestin-related trafficking adapter 3 (ALY2) (Saccharomyces cerevisiae (strain ATCC 204508 / S288c) (Baker's yeast)).